Reading from the N-terminus, the 407-residue chain is Inhibin beta B chain (407 aa).

The N-terminal stretch at 1-28 is a signal peptide; sequence MDGLPGRALGAACLLLLAAGWLGPEAWG. The disordered stretch occupies residues 26-62; sequence AWGSPTPPPTPAAPPPPPPPGSPGGSQDTCTSCGGFR. Positions 29-292 are excised as a propeptide; sequence SPTPPPTPAA…GDSRHRIRKR (264 aa). Over residues 30–47 the composition is skewed to pro residues; the sequence is PTPPPTPAAPPPPPPPGS. The N-linked (GlcNAc...) asparagine glycan is linked to N93. 4 disulfides stabilise this stretch: C296–C304, C303–C372, C332–C404, and C336–C406.

The protein belongs to the TGF-beta family. Dimeric, linked by one or more disulfide bonds. Inhibin B is a dimer of alpha and beta-B. Activin B is a homodimer of beta-B. Activin AB is a dimer of beta-A and beta-B. Interacts with FST and FSTL3. Activin B interacts with BMPR2.

It is found in the secreted. Functionally, inhibins and activins inhibit and activate, respectively, the secretion of follitropin by the pituitary gland. Inhibins/activins are involved in regulating a number of diverse functions such as hypothalamic and pituitary hormone secretion, gonadal hormone secretion, germ cell development and maturation, erythroid differentiation, insulin secretion, nerve cell survival, embryonic axial development or bone growth, depending on their subunit composition. Inhibins appear to oppose the functions of activins. Its function is as follows. Activin B is a dimer of alpha and beta-B that plays a role in several essential biological processes including embryonic development, stem cell maintenance and differentiation, haematopoiesis, cell proliferation and wound healing. Signals through type I receptor ACVR1C, abundantly expressed in pancreatic beta cells, and type II receptors like ACVR2A or BMPR2. Upon ligand binding, these receptors phosphorylate intracellular signaling mediators SMAD2 and SMAD3, which form a complex with SMAD4, translocate to the nucleus, and regulate gene expression. Plays a crucial role in the induction of hepcidin by inflammation through activation of ACVR1C and subsequent phosphorylation of SMAD1/5/8. Regulates adipocyte lipid metabolism by decreasing non-esterified fatty acids and glycerol release and increases intracellular triglyceride content. Stimulates wound healing by promoting cell migration and hair follicle regeneration through the JNK and ERK signaling pathways downstream of RHOA. In terms of biological role, inhibin B is a dimer of alpha and beta-B that plays a crucial role in the regulation of the reproductive system by inhibiting the secretion of follicle-stimulating hormone (FSH) from the anterior pituitary gland. Thereby, maintains reproductive homeostasis in both males and females. Acts as a more potent suppressor of FSH release than inhibin A. Functions as competitive receptor antagonist binding activin type II receptors with high affinity in the presence of the TGF-beta type III coreceptor/TGFBR3L. The protein is Inhibin beta B chain (INHBB) of Homo sapiens (Human).